The sequence spans 727 residues: DNA topoisomerase 3 (727 aa).

The Toprim domain maps to 3 to 136; that stretch reads KTVVLAEKPS…LKRLWISSVT (134 aa). Residues glutamate 9 and aspartate 105 each contribute to the Mg(2+) site. One can recognise a Topo IA-type catalytic domain in the interval 153–592; the sequence is FENLYHSAVA…EMKEYAKQTI (440 aa). The segment at 187 to 192 is interaction with DNA; sequence SCGRVQ. Residue tyrosine 310 is the O-(5'-phospho-DNA)-tyrosine intermediate of the active site. Positions 685–711 are enriched in basic and acidic residues; that stretch reads RRAKDKNSKASKRDVHSYMKKQNKDEP. Residues 685 to 713 are disordered; the sequence is RRAKDKNSKASKRDVHSYMKKQNKDEPIN.

The protein belongs to the type IA topoisomerase family. The cofactor is Mg(2+).

The catalysed reaction is ATP-independent breakage of single-stranded DNA, followed by passage and rejoining.. In terms of biological role, releases the supercoiling and torsional tension of DNA, which is introduced during the DNA replication and transcription, by transiently cleaving and rejoining one strand of the DNA duplex. Introduces a single-strand break via transesterification at a target site in duplex DNA. The scissile phosphodiester is attacked by the catalytic tyrosine of the enzyme, resulting in the formation of a DNA-(5'-phosphotyrosyl)-enzyme intermediate and the expulsion of a 3'-OH DNA strand. The free DNA strand then undergoes passage around the unbroken strand, thus removing DNA supercoils. Finally, in the religation step, the DNA 3'-OH attacks the covalent intermediate to expel the active-site tyrosine and restore the DNA phosphodiester backbone. The protein is DNA topoisomerase 3 of Bacillus licheniformis (strain ATCC 14580 / DSM 13 / JCM 2505 / CCUG 7422 / NBRC 12200 / NCIMB 9375 / NCTC 10341 / NRRL NRS-1264 / Gibson 46).